Consider the following 403-residue polypeptide: Phosphopentomutase (403 aa).

Residues Asp13, Asp298, His303, Asp339, His340, and His351 each contribute to the Mn(2+) site.

Belongs to the phosphopentomutase family. Mn(2+) is required as a cofactor.

Its subcellular location is the cytoplasm. It carries out the reaction 2-deoxy-alpha-D-ribose 1-phosphate = 2-deoxy-D-ribose 5-phosphate. It catalyses the reaction alpha-D-ribose 1-phosphate = D-ribose 5-phosphate. It functions in the pathway carbohydrate degradation; 2-deoxy-D-ribose 1-phosphate degradation; D-glyceraldehyde 3-phosphate and acetaldehyde from 2-deoxy-alpha-D-ribose 1-phosphate: step 1/2. In terms of biological role, isomerase that catalyzes the conversion of deoxy-ribose 1-phosphate (dRib-1-P) and ribose 1-phosphate (Rib-1-P) to deoxy-ribose 5-phosphate (dRib-5-P) and ribose 5-phosphate (Rib-5-P), respectively. The sequence is that of Phosphopentomutase from Streptococcus pneumoniae serotype 19F (strain G54).